We begin with the raw amino-acid sequence, 187 residues long: Elongation factor P (187 aa).

Belongs to the elongation factor P family.

It is found in the cytoplasm. It participates in protein biosynthesis; polypeptide chain elongation. In terms of biological role, involved in peptide bond synthesis. Stimulates efficient translation and peptide-bond synthesis on native or reconstituted 70S ribosomes in vitro. Probably functions indirectly by altering the affinity of the ribosome for aminoacyl-tRNA, thus increasing their reactivity as acceptors for peptidyl transferase. This is Elongation factor P from Corynebacterium diphtheriae (strain ATCC 700971 / NCTC 13129 / Biotype gravis).